The chain runs to 476 residues: Cysteine--tRNA ligase (476 aa).

Position 31 (C31) interacts with Zn(2+). The 'HIGH' region signature appears at 33–43; that stretch reads PTVYNYAHIGN. C211, H236, and E240 together coordinate Zn(2+). The short motif at 269–273 is the 'KMSKS' region element; sequence KMSKS. Residue K272 participates in ATP binding.

This sequence belongs to the class-I aminoacyl-tRNA synthetase family. As to quaternary structure, monomer. The cofactor is Zn(2+).

Its subcellular location is the cytoplasm. It catalyses the reaction tRNA(Cys) + L-cysteine + ATP = L-cysteinyl-tRNA(Cys) + AMP + diphosphate. This is Cysteine--tRNA ligase from Xanthomonas oryzae pv. oryzae (strain MAFF 311018).